The sequence spans 224 residues: UPF0173 metal-dependent hydrolase TON_1314 (224 aa).

Belongs to the UPF0173 family.

The sequence is that of UPF0173 metal-dependent hydrolase TON_1314 from Thermococcus onnurineus (strain NA1).